The primary structure comprises 202 residues: Matrix protein (202 aa).

The tract at residues 1-33 is disordered; sequence MNILRKIVKNRKDEDTQKPSPASAPPDDDDLWL. The short motif at 35–38 is the PPXY motif element; the sequence is PPEY. An essential for glycoprotein binding region spans residues 115 to 151; sequence KLRRTLIFQWADSRGPLEGEELEHSQEITWDDDTEFV.

It belongs to the lyssavirus matrix protein family. In terms of assembly, homomultimer. Interacts with nucleoprotein and with the cytoplasmic domain of glycoprotein. Interacts with host ATP6V1A; this interaction plays an important role in virion uncoating after viral entry.

The protein resides in the virion membrane. The protein localises to the host endomembrane system. Its subcellular location is the host cytoplasm. Plays a major role in assembly, budding and uncoating of virion after membrane fusion. Completely covers the ribonucleoprotein coil and keep it in condensed bullet-shaped form. Inhibits viral transcription and stimulates replication. Plays a major role in early induction of TRAIL-mediated apoptosis in infected neurons. Inhibits the integrated stress response (ISR) in the infected cell by blocking the formation of stress granules. This Homo sapiens (Human) protein is Matrix protein (M).